The sequence spans 247 residues: Acetoacetate decarboxylase 1 (247 aa).

Lysine 116 (schiff-base intermediate with acetoacetate) is an active-site residue.

Belongs to the ADC family.

The catalysed reaction is acetoacetate + H(+) = acetone + CO2. Catalyzes the conversion of acetoacetate to acetone and carbon dioxide. The chain is Acetoacetate decarboxylase 1 from Mesorhizobium japonicum (strain LMG 29417 / CECT 9101 / MAFF 303099) (Mesorhizobium loti (strain MAFF 303099)).